The chain runs to 749 residues: uncharacterized protein (749 aa).

4 disordered regions span residues Met1 to Asn58, Asp124 to Leu170, Ser200 to Ser291, and Tyr385 to Thr405. The span at Leu13–Ser24 shows a compositional bias: low complexity. 4 stretches are compositionally biased toward polar residues: residues Lys149 to Asn159, Glu238 to Asn252, Leu265 to Ser275, and Ser388 to Thr405. The region spanning Lys644 to Val729 is the PSP1 C-terminal domain.

This is an uncharacterized protein from Schizosaccharomyces pombe (strain 972 / ATCC 24843) (Fission yeast).